We begin with the raw amino-acid sequence, 103 residues long: Putative membrane protein insertion efficiency factor (103 aa).

The protein belongs to the UPF0161 family.

The protein localises to the cell membrane. Its function is as follows. Could be involved in insertion of integral membrane proteins into the membrane. In Clavibacter sepedonicus (Clavibacter michiganensis subsp. sepedonicus), this protein is Putative membrane protein insertion efficiency factor.